The chain runs to 550 residues: Sterol O-acyltransferase 1 (550 aa).

Residue methionine 1 is modified to N-acetylmethionine. The interval 1–36 (MVGEEKMSLRNRLSKSRENPEEDEDQRKPAKESLEA) is disordered. Residues 1 to 138 (MVGEEKMSLR…LDELLEVDHI (138 aa)) are Cytoplasmic-facing. A Phosphoserine modification is found at serine 8. The segment covering 15–34 (KSRENPEEDEDQRKPAKESL) has biased composition (basic and acidic residues). Histidine 137 provides a ligand contact to cholesterol. A helical membrane pass occupies residues 139–160 (RTIYHMFIALLILFILSTLVVD). Topologically, residues 161–180 (YIDEGRLVLEFSLLSYAFGK) are lumenal. Residues 181 to 206 (FPTVVWTWWIMFLSTFSVPYFLFQRW) traverse the membrane as a helical segment. At 207-218 (ATGYSKSSHPLI) the chain is on the cytoplasmic side. A helical membrane pass occupies residues 219–244 (NSLFHGFLFMVFQIGILGFGPTYVVL). Residues 245–252 (AYTLPPAS) lie on the Lumenal side of the membrane. Residues 253-276 (RFIIIFEQIRFVMKAHSFVRENVP) form a helical membrane-spanning segment. The Cytoplasmic segment spans residues 277–319 (RVLNSAKEKSSTVPIPTVNQYLYFLFAPTLIYRDSYPRNPTVR). The helical transmembrane segment at 320-352 (WGYVAMQFAQVFGCFFYVYYIFERLCAPLFRNI) threads the bilayer. The Lumenal segment spans residues 353 to 369 (KQEPFSARVLVLCVFNS). The helical transmembrane segment at 370-395 (ILPGVLILFLTFFAFLHCWLNAFAEM) threads the bilayer. At 396 to 443 (LRFGDRMFYKDWWNSTSYSNYYRTWNVVVHDWLYYYAYKDFLWFFSKR) the chain is on the cytoplasmic side. The short motif at 403–409 (FYKDWWN) is the FYXDWWN motif element. Positions 415, 418, 421, 425, 433, 445, and 456 each coordinate an acyl-CoA. The helical transmembrane segment at 444 to 468 (FKSAAMLAAFAVSAVVHEYALAVCL) threads the bilayer. Histidine 460 is an active-site residue. At 469-474 (SFFYPV) the chain is on the lumenal side. The chain crosses the membrane as a helical span at residues 475–490 (LFVLFMFFGMAFNFIV). The Cytoplasmic portion of the chain corresponds to 491 to 496 (NDSRKK). A helical membrane pass occupies residues 497–528 (PIWNVMMWTSLFLGNGVLLCFYSQEWYARQHC). A disulfide bridge links cysteine 528 with cysteine 546. Over 529–550 (PLKNPTFLDYVRPRSWTCRYVF) the chain is Lumenal.

The protein belongs to the membrane-bound acyltransferase family. Sterol o-acyltransferase subfamily. As to quaternary structure, may form homo- or heterodimers. Interacts with UBIAD1. Expressed in most tissues, but most strongly in the adrenal gland. Expressed more strongly in liver Kupffer cells than in hepatocytes.

The protein resides in the endoplasmic reticulum membrane. The enzyme catalyses a sterol + a long-chain fatty acyl-CoA = a long-chain 3-hydroxysterol ester + CoA. The catalysed reaction is cholesterol + an acyl-CoA = a cholesterol ester + CoA. It catalyses the reaction cholesterol + (9Z)-octadecenoyl-CoA = cholesteryl (9Z-octadecenoate) + CoA. It carries out the reaction cholesterol + hexadecanoyl-CoA = cholesteryl hexadecanoate + CoA. The enzyme catalyses octadecanoyl-CoA + cholesterol = cholesteryl octadecanoate + CoA. The catalysed reaction is (9Z,12Z)-octadecadienoyl-CoA + cholesterol = cholesteryl (9Z,12Z)-octadecadienoate + CoA. It catalyses the reaction (5Z,8Z,11Z,14Z)-eicosatetraenoyl-CoA + cholesterol = cholesteryl (5Z,8Z,11Z,14Z)-eicosatetraenoate + CoA. It carries out the reaction (9Z)-hexadecenoyl-CoA + cholesterol = cholesteryl (9Z)-hexadecenoate + CoA. The enzyme catalyses (11Z)-octadecenoyl-CoA + cholesterol = cholesteryl (11Z)-octadecenoate + CoA. The catalysed reaction is (7Z)-octadecenoyl-CoA + cholesterol = cholesteryl (7Z)-octadecenoate + CoA. Functionally, catalyzes the formation of fatty acid-cholesterol esters, which are less soluble in membranes than cholesterol. Plays a role in lipoprotein assembly and dietary cholesterol absorption. Preferentially utilizes oleoyl-CoA ((9Z)-octadecenoyl-CoA) as a substrate: shows a higher activity towards an acyl-CoA substrate with a double bond at the delta-9 position (9Z) than towards saturated acyl-CoA or an unsaturated acyl-CoA with a double bond at the delta-7 (7Z) or delta-11 (11Z) positions. This is Sterol O-acyltransferase 1 (SOAT1) from Macaca fascicularis (Crab-eating macaque).